We begin with the raw amino-acid sequence, 325 residues long: UDP-N-acetylenolpyruvoylglucosamine reductase (325 aa).

The FAD-binding PCMH-type domain maps to 40-221 (RTGGLAELFY…RAAMDEVALH (182 aa)). Arg186 is an active-site residue. Residue Ser235 is the Proton donor of the active site. The active site involves Glu305.

It belongs to the MurB family. It depends on FAD as a cofactor.

The protein localises to the cytoplasm. The catalysed reaction is UDP-N-acetyl-alpha-D-muramate + NADP(+) = UDP-N-acetyl-3-O-(1-carboxyvinyl)-alpha-D-glucosamine + NADPH + H(+). Its pathway is cell wall biogenesis; peptidoglycan biosynthesis. Functionally, cell wall formation. The protein is UDP-N-acetylenolpyruvoylglucosamine reductase of Bartonella henselae (strain ATCC 49882 / DSM 28221 / CCUG 30454 / Houston 1) (Rochalimaea henselae).